Here is a 207-residue protein sequence, read N- to C-terminus: Transcriptional regulator YqjI (207 aa).

Over residues 1–40 (MSHHHEGCCKHEGQPRHEGCCKGEKSEHEHCGHGHQHEHG) the composition is skewed to basic and acidic residues. The interval 1 to 46 (MSHHHEGCCKHEGQPRHEGCCKGEKSEHEHCGHGHQHEHGQCCGGR) is disordered.

Oligomer (probable predominant form) and monomer.

Divalent metals such as nickel and iron have a similar negative effect on YqjI DNA-binding activity. Its function is as follows. Represses the expression of YqjH which is involved in iron homeostasis under excess nickel conditions. Also represses its own expression. The protein is Transcriptional regulator YqjI (yqjI) of Escherichia coli (strain K12).